The sequence spans 149 residues: Transcriptional repressor NrdR (149 aa).

A zinc finger lies at 3-34 (CPFCSATDTKVIDSRLVAEGHQVRRRRECTEC). The 91-residue stretch at 49-139 (PRVIKRDGSR…VYRAFEDVSE (91 aa)) folds into the ATP-cone domain.

Belongs to the NrdR family. It depends on Zn(2+) as a cofactor.

Functionally, negatively regulates transcription of bacterial ribonucleotide reductase nrd genes and operons by binding to NrdR-boxes. This Shewanella putrefaciens (strain CN-32 / ATCC BAA-453) protein is Transcriptional repressor NrdR.